The primary structure comprises 367 residues: Succinyl-diaminopimelate desuccinylase (367 aa).

His67 is a Zn(2+) binding site. Residue Asp69 is part of the active site. Residue Asp98 coordinates Zn(2+). Glu128 functions as the Proton acceptor in the catalytic mechanism. Residues Glu129, Glu157, and His342 each coordinate Zn(2+).

Belongs to the peptidase M20A family. DapE subfamily. As to quaternary structure, homodimer. Requires Zn(2+) as cofactor. It depends on Co(2+) as a cofactor.

The catalysed reaction is N-succinyl-(2S,6S)-2,6-diaminopimelate + H2O = (2S,6S)-2,6-diaminopimelate + succinate. The protein operates within amino-acid biosynthesis; L-lysine biosynthesis via DAP pathway; LL-2,6-diaminopimelate from (S)-tetrahydrodipicolinate (succinylase route): step 3/3. Its function is as follows. Catalyzes the hydrolysis of N-succinyl-L,L-diaminopimelic acid (SDAP), forming succinate and LL-2,6-diaminopimelate (DAP), an intermediate involved in the bacterial biosynthesis of lysine and meso-diaminopimelic acid, an essential component of bacterial cell walls. In Campylobacter hominis (strain ATCC BAA-381 / DSM 21671 / CCUG 45161 / LMG 19568 / NCTC 13146 / CH001A), this protein is Succinyl-diaminopimelate desuccinylase.